Here is a 463-residue protein sequence, read N- to C-terminus: Cysteine--tRNA ligase (463 aa).

Zn(2+) is bound at residue Cys33. Positions 35–45 (PTVYDFAHIGN) match the 'HIGH' region motif. Zn(2+) is bound by residues Cys221, His246, and Glu250. The 'KMSKS' region signature appears at 279–283 (KMSKS). Residue Lys282 coordinates ATP.

This sequence belongs to the class-I aminoacyl-tRNA synthetase family. As to quaternary structure, monomer. Requires Zn(2+) as cofactor.

The protein resides in the cytoplasm. The catalysed reaction is tRNA(Cys) + L-cysteine + ATP = L-cysteinyl-tRNA(Cys) + AMP + diphosphate. This Rhizobium johnstonii (strain DSM 114642 / LMG 32736 / 3841) (Rhizobium leguminosarum bv. viciae) protein is Cysteine--tRNA ligase.